The sequence spans 186 residues: Putative manganese efflux pump MntP (186 aa).

Helical transmembrane passes span 1 to 21, 41 to 61, 71 to 91, 105 to 125, 130 to 150, and 165 to 185; these read MSFLTNFLLGLGLSMDAFAVS, VFFGGFQAFMPVLGWLGGSAV, WIAFGLLTFIGGKMIYEALYG, LLMLAIATSIDALAVGISFAF, ILEPVIIIGCVTFVMSFCGAV, and IIGGLILIGIGGKILAEHLLW.

Belongs to the MntP (TC 9.B.29) family.

It localises to the cell membrane. Its function is as follows. Probably functions as a manganese efflux pump. This is Putative manganese efflux pump MntP from Methanosarcina barkeri (strain Fusaro / DSM 804).